The sequence spans 1355 residues: DNA-directed RNA polymerase subunit beta' (1355 aa).

Cys219, Cys293, Cys300, and Cys303 together coordinate Zn(2+). Positions 1331–1355 are disordered; the sequence is AEVEVDDEVDDDYEDDDEDDDDYED.

This sequence belongs to the RNA polymerase beta' chain family. RpoC2 subfamily. In terms of assembly, in cyanobacteria the RNAP catalytic core is composed of 2 alpha, 1 beta, 1 beta', 1 gamma and 1 omega subunit. When a sigma factor is associated with the core the holoenzyme is formed, which can initiate transcription. Zn(2+) is required as a cofactor.

The catalysed reaction is RNA(n) + a ribonucleoside 5'-triphosphate = RNA(n+1) + diphosphate. Its function is as follows. DNA-dependent RNA polymerase catalyzes the transcription of DNA into RNA using the four ribonucleoside triphosphates as substrates. This is DNA-directed RNA polymerase subunit beta' from Nostoc sp. (strain PCC 7120 / SAG 25.82 / UTEX 2576).